The primary structure comprises 120 residues: Glycine cleavage system H protein (120 aa).

Positions 17-99 constitute a Lipoyl-binding domain; it reads VATVGITTYA…QGAGWFFKLK (83 aa). At lysine 58 the chain carries N6-lipoyllysine.

It belongs to the GcvH family. In terms of assembly, the glycine cleavage system is composed of four proteins: P, T, L and H. (R)-lipoate is required as a cofactor.

Functionally, the glycine cleavage system catalyzes the degradation of glycine. The H protein shuttles the methylamine group of glycine from the P protein to the T protein. The chain is Glycine cleavage system H protein from Rhizobium etli (strain CIAT 652).